Consider the following 876-residue polypeptide: AP-5 complex subunit beta-1 (876 aa).

Probably part of the adaptor protein complex 5 (AP-5), a tetramer composed of AP5B1, AP5M1, AP5S1 and AP5Z1. Interacts with ZFYVE26 and SPG11.

Functionally, as part of AP-5, a probable fifth adaptor protein complex it may be involved in endosomal transport. The polypeptide is AP-5 complex subunit beta-1 (Ap5b1) (Mus musculus (Mouse)).